The sequence spans 97 residues: ATP-dependent Clp protease adapter protein ClpS (97 aa).

Belongs to the ClpS family. Binds to the N-terminal domain of the chaperone ClpA.

Its function is as follows. Involved in the modulation of the specificity of the ClpAP-mediated ATP-dependent protein degradation. The protein is ATP-dependent Clp protease adapter protein ClpS of Nostoc sp. (strain PCC 7120 / SAG 25.82 / UTEX 2576).